A 370-amino-acid polypeptide reads, in one-letter code: Aminomethyltransferase (370 aa).

Belongs to the GcvT family. As to quaternary structure, the glycine cleavage system is composed of four proteins: P, T, L and H.

The catalysed reaction is N(6)-[(R)-S(8)-aminomethyldihydrolipoyl]-L-lysyl-[protein] + (6S)-5,6,7,8-tetrahydrofolate = N(6)-[(R)-dihydrolipoyl]-L-lysyl-[protein] + (6R)-5,10-methylene-5,6,7,8-tetrahydrofolate + NH4(+). In terms of biological role, the glycine cleavage system catalyzes the degradation of glycine. The polypeptide is Aminomethyltransferase (Prochlorococcus marinus (strain AS9601)).